Here is a 217-residue protein sequence, read N- to C-terminus: MGQKVCAHGFRVGPTLIKDWDSILYAEKHYKTLFIQDLKIRDLINKWFNQAQISRVLIERPSNKSIIININAKKPNIIIGKNGTEIDKLKKAIENMTFLKEVYINIHEVRKFNIDAAIVAQTIAAQLEKRVSFRKAMKTAIQASFKQGGQGIRVSCSGRLGGAEIARTEWYIEGRMPLHTLRADIDYSTAEAITTYGVIGVKVWIYKGEYKENKRYN.

The KH type-2 domain maps to 40–110; sequence IRDLINKWFN…EVYINIHEVR (71 aa).

Belongs to the universal ribosomal protein uS3 family. In terms of assembly, part of the 30S ribosomal subunit. Forms a tight complex with proteins S10 and S14.

In terms of biological role, binds the lower part of the 30S subunit head. Binds mRNA in the 70S ribosome, positioning it for translation. This is Small ribosomal subunit protein uS3 from Rickettsia prowazekii (strain Madrid E).